The sequence spans 1054 residues: NACHT, LRR and PYD domains-containing protein 12 (1054 aa).

Residues 1-95 form the Pyrin domain; the sequence is MLPSTARDGL…WERGQGEDLV (95 aa). The FISNA domain occupies 129–201; it reads YKDYVRRKFQ…SPIQMETLFE (73 aa). An NACHT domain is found at 211 to 528; sequence HTVVLQGAAG…EFFAAMYCAL (318 aa). 217–224 lines the ATP pocket; that stretch reads GAAGMGKS. 8 LRR repeats span residues 821-841, 850-871, 878-899, 907-928, 935-955, 964-985, 992-1013, and 1021-1042; these read YLVE…KLLC, RLRT…DLAS, SLLE…LLCE, KLQT…GIAS, CLQE…QLLG, RLQK…DLSS, TLHE…LLCK, and KLRV…RMAA.

The protein belongs to the NLRP family. In terms of assembly, interacts (via pyrin domain) with ASC. Interacts (via pyrin domain) with FAF1 (via UBA domain). Interacts with MAP3K14; this interaction promotes proteasomal degradation of MAP3K14. Interacts with NOD2; this interaction promotes degradation of NOD2 through the ubiquitin-proteasome pathway. Interacts with HSPA1A and HSPA8. Interacts with HSP90AA1. Interacts with TRIM25; this interaction inhibits RIGI-mediated signaling pathway. In terms of tissue distribution, mainly expressed in dendritic cells (DCs) and neutrophils.

Its subcellular location is the cytoplasm. Functionally, plays an essential role as an potent mitigator of inflammation. Primarily expressed in dendritic cells and macrophages, inhibits both canonical and non-canonical NF-kappa-B and ERK activation pathways. Functions as a negative regulator of NOD2 by targeting it to degradation via the proteasome pathway. In turn, promotes bacterial tolerance. Also inhibits the RIGI-mediated immune signaling against RNA viruses by reducing the E3 ubiquitin ligase TRIM25-mediated 'Lys-63'-linked RIGI activation but enhancing the E3 ubiquitin ligase RNF125-mediated 'Lys-48'-linked RIGI degradation. Also acts as a negative regulator of inflammatory response to mitigate obesity and obesity-associated diseases in adipose tissue. This is NACHT, LRR and PYD domains-containing protein 12 (Nlrp12) from Mus musculus (Mouse).